We begin with the raw amino-acid sequence, 277 residues long: Nudix hydrolase 10 (277 aa).

The region spanning 97–235 is the Nudix hydrolase domain; sequence WIPEAESTIP…KNDLFKDIHH (139 aa). Positions 142–163 match the Nudix box motif; sequence GVVDEGEEIFAAAIREVKEETG. Residues E157 and E161 each contribute to the Mg(2+) site.

It belongs to the Nudix hydrolase family. The cofactor is Mg(2+). Requires Mn(2+) as cofactor. Expressed in roots, stems and, at lower level, leaves.

The enzyme catalyses ADP-D-ribose + H2O = D-ribose 5-phosphate + AMP + 2 H(+). It carries out the reaction NAD(+) + H2O = beta-nicotinamide D-ribonucleotide + AMP + 2 H(+). The catalysed reaction is NADH + H2O = reduced beta-nicotinamide D-ribonucleotide + AMP + 2 H(+). Functionally, may mediate the hydrolysis of some nucleoside diphosphate derivatives. In vitro, uses both ADP-ribose and NADH as substrates; however the relevance of such substrates in vivo is unclear. The protein is Nudix hydrolase 10 (NUDT10) of Arabidopsis thaliana (Mouse-ear cress).